The sequence spans 152 residues: HMG-Y-related protein B (152 aa).

The H15 domain maps to 1–54 (ALNEADGSNKSAISKYIETTYGELPDETVLGSHLNKMKESGELAFKQNNYMKAD). A disordered region spans residues 40–152 (SGELAFKQNN…PQLTEVSVES (113 aa)). DNA-binding regions (a.T hook) lie at residues 60 to 68 (KRGRGRPPK), 82 to 90 (PRPRGRPPK), 108 to 116 (GRPRGRPKK), and 132 to 140 (GRPRGRPPK).

It belongs to the HMGA family.

The protein localises to the nucleus. The sequence is that of HMG-Y-related protein B from Glycine max (Soybean).